Here is a 487-residue protein sequence, read N- to C-terminus: Solute carrier family 22 member 15-like (487 aa).

Residues 22-42 (AFLTLLQVYVACQSMLIVLVG) traverse the membrane as a helical segment. Asn70 carries N-linked (GlcNAc...) asparagine glycosylation. A run of 11 helical transmembrane segments spans residues 90-110 (LASS…GPLS), 117-137 (PVYL…ALAP), 141-161 (VFAV…LVSF), 178-198 (SLTN…GFYI), 203-223 (TLAF…FLLP), 286-306 (ILLM…TLNA), 315-335 (LNVA…LYFI), 345-365 (ATAG…FLPE), 374-394 (TVLA…VYIY), 406-426 (AGLG…PFIP), and 435-455 (MPFV…LLLP).

The protein belongs to the major facilitator (TC 2.A.1) superfamily. Organic cation transporter (TC 2.A.1.19) family.

It localises to the membrane. Functionally, probably transports organic cations. In Xenopus tropicalis (Western clawed frog), this protein is Solute carrier family 22 member 15-like (slc22a15b).